Reading from the N-terminus, the 435-residue chain is Angio-associated migratory cell protein (435 aa).

The interval 1-65 (MESESESGAA…EEEEEGNEEG (65 aa)) is disordered. S20 carries the post-translational modification Phosphoserine. The span at 39-63 (DPDDLAQEMEDVDFEEEEEEEEGNE) shows a compositional bias: acidic residues. WD repeat units lie at residues 90-130 (LHSA…LLFE), 133-172 (GHKD…EVWS), 174-213 (EAGD…KTFQ), 215-255 (PNCP…HVLK), 259-300 (GHQG…GVFR), 316-355 (SESN…LRHQ), 357-396 (QHQS…LLTD), and 399-434 (GHTA…QRPD).

Its subcellular location is the cell membrane. It is found in the cytoplasm. Functionally, plays a role in angiogenesis and cell migration. In smooth muscle cell migration, may act through the RhoA pathway. This Canis lupus familiaris (Dog) protein is Angio-associated migratory cell protein (AAMP).